We begin with the raw amino-acid sequence, 423 residues long: UPF0229 protein PLES_05841 (423 aa).

Residues 84-107 (AGEHIARPSGGGGGRGGGKASNSG) form a disordered region. A compositionally biased stretch (gly residues) spans 92 to 102 (SGGGGGRGGGK).

The protein belongs to the UPF0229 family.

This Pseudomonas aeruginosa (strain LESB58) protein is UPF0229 protein PLES_05841.